Here is a 772-residue protein sequence, read N- to C-terminus: Ion-translocating oxidoreductase complex subunit C (772 aa).

2 consecutive 4Fe-4S ferredoxin-type domains span residues 369–397 (GEPQEEQSCIRCSACADACPADLLPQQLY) and 407–436 (KATTHNIADCIECGACAWVCPSNIPLVQYF). 8 residues coordinate [4Fe-4S] cluster: cysteine 377, cysteine 380, cysteine 383, cysteine 387, cysteine 416, cysteine 419, cysteine 422, and cysteine 426. The tract at residues 599–748 (KARKLEQQQA…EPEEQVDPRK (150 aa)) is disordered.

This sequence belongs to the 4Fe4S bacterial-type ferredoxin family. RnfC subfamily. As to quaternary structure, the complex is composed of six subunits: RsxA, RsxB, RsxC, RsxD, RsxE and RsxG. It depends on [4Fe-4S] cluster as a cofactor.

It is found in the cell inner membrane. Part of a membrane-bound complex that couples electron transfer with translocation of ions across the membrane. Required to maintain the reduced state of SoxR. This Shigella dysenteriae serotype 1 (strain Sd197) protein is Ion-translocating oxidoreductase complex subunit C.